The primary structure comprises 474 residues: Trehalose-6-phosphate synthase (474 aa).

Residue Arg-10 coordinates D-glucose 6-phosphate. 22 to 23 (GG) is a UDP-alpha-D-glucose binding site. D-glucose 6-phosphate contacts are provided by Tyr-77 and Asp-131. 2 residues coordinate UDP-alpha-D-glucose: Arg-263 and Lys-268. Arg-301 contributes to the D-glucose 6-phosphate binding site. Residues Phe-340 and 366-370 (LVAKE) contribute to the UDP-alpha-D-glucose site.

This sequence belongs to the glycosyltransferase 20 family. As to quaternary structure, homotetramer.

It catalyses the reaction D-glucose 6-phosphate + UDP-alpha-D-glucose = alpha,alpha-trehalose 6-phosphate + UDP + H(+). It participates in glycan biosynthesis; trehalose biosynthesis. Probably involved in the osmoprotection via the biosynthesis of trehalose. Catalyzes the transfer of glucose from UDP-alpha-D-glucose (UDP-Glc) to D-glucose 6-phosphate (Glc-6-P) to form trehalose-6-phosphate. Acts with retention of the anomeric configuration of the UDP-sugar donor. This Escherichia coli O157:H7 protein is Trehalose-6-phosphate synthase.